The sequence spans 301 residues: 4-diphosphocytidyl-2-C-methyl-D-erythritol kinase (301 aa).

Lys18 is an active-site residue. Position 109-119 (109-119 (PIASGIGGGSA)) interacts with ATP. Asp151 is a catalytic residue.

Belongs to the GHMP kinase family. IspE subfamily.

It carries out the reaction 4-CDP-2-C-methyl-D-erythritol + ATP = 4-CDP-2-C-methyl-D-erythritol 2-phosphate + ADP + H(+). It functions in the pathway isoprenoid biosynthesis; isopentenyl diphosphate biosynthesis via DXP pathway; isopentenyl diphosphate from 1-deoxy-D-xylulose 5-phosphate: step 3/6. In terms of biological role, catalyzes the phosphorylation of the position 2 hydroxy group of 4-diphosphocytidyl-2C-methyl-D-erythritol. The polypeptide is 4-diphosphocytidyl-2-C-methyl-D-erythritol kinase (Rhizobium meliloti (strain 1021) (Ensifer meliloti)).